The chain runs to 424 residues: C4-dicarboxylate transport protein (424 aa).

8 helical membrane-spanning segments follow: residues 4-24 (SLFK…VLLG), 44-64 (LIKM…IAGM), 76-96 (VALI…LVVV), 142-162 (IGAF…LFGF), 184-206 (VFFG…AMAF), 222-242 (LIVC…GLIA), 326-346 (IWHQ…AAGV), and 352-372 (IVLA…LALI).

This sequence belongs to the dicarboxylate/amino acid:cation symporter (DAACS) (TC 2.A.23) family.

The protein localises to the cell inner membrane. Its function is as follows. Responsible for the transport of dicarboxylates such as succinate, fumarate, and malate from the periplasm across the membrane. The sequence is that of C4-dicarboxylate transport protein from Erwinia tasmaniensis (strain DSM 17950 / CFBP 7177 / CIP 109463 / NCPPB 4357 / Et1/99).